The chain runs to 128 residues: Calcitonin gene-related peptide 1 (128 aa).

An N-terminal signal peptide occupies residues 1–25 (MGLWKSSPFLAFSILVLCQAGGLQA). Positions 26–80 (APFRSALEGLPDPTALSEKEGRLLLAALVKAYVQRKNELEQEQEQETEGSSITAQ) are excised as a propeptide. The interval 63–83 (ELEQEQEQETEGSSITAQKRS) is disordered. Polar residues predominate over residues 74 to 83 (GSSITAQKRS). A disulfide bridge links C84 with C89. The residue at position 119 (F119) is a Phenylalanine amide. Residues 125-128 (DLRA) constitute a propeptide that is removed on maturation.

Belongs to the calcitonin family.

The protein resides in the secreted. CGRP1/CALCA is a peptide hormone that induces vasodilation mediated by the CALCRL-RAMP1 receptor complex. Dilates a variety of vessels including the coronary, cerebral and systemic vasculature. Its abundance in the CNS also points toward a neurotransmitter or neuromodulator role. It also elevates platelet cAMP. CGRP1 can also bind and activate CALCR-RAMP1 (AMYR1) receptor complex. The polypeptide is Calcitonin gene-related peptide 1 (CALCA) (Canis lupus familiaris (Dog)).